The following is a 481-amino-acid chain: 3-ketoacyl-CoA synthase 8 (481 aa).

A run of 2 helical transmembrane segments spans residues 4-24 and 44-64; these read LKMV…AMKG and LQTI…YMLT. In terms of domain architecture, FAE spans 61 to 358; sequence YMLTRPKPVY…FFITFVKKKY (298 aa). Active-site residues include cysteine 213, histidine 292, histidine 376, histidine 380, histidine 409, and asparagine 413.

Belongs to the thiolase-like superfamily. Chalcone/stilbene synthases family. In terms of tissue distribution, expressed in leaves and seedlings.

It is found in the endoplasmic reticulum membrane. It carries out the reaction a very-long-chain acyl-CoA + malonyl-CoA + H(+) = a very-long-chain 3-oxoacyl-CoA + CO2 + CoA. Its pathway is lipid metabolism; fatty acid biosynthesis. The sequence is that of 3-ketoacyl-CoA synthase 8 from Arabidopsis thaliana (Mouse-ear cress).